Here is a 418-residue protein sequence, read N- to C-terminus: Deubiquitinase and deneddylase Dub1 (418 aa).

Positions 1–10 are enriched in polar residues; sequence MLSPTNSTSK. Residues 1–23 are disordered; it reads MLSPTNSTSKKAPVPPQDSSKPV. The helical transmembrane segment at 40-60 threads the bilayer; it reads TALAVLLVVVTLGLILLFYSF. Positions 72–143 are disordered; the sequence is TRPSTKEQPT…PPLPPKAPKP (72 aa). Positions 86–141 are enriched in pro residues; it reads VPLPSPPLAVPRPSTPPPPVISRPSTPPAPTPAISPPSTPSAPKPSTPPPLPPKAP. Residues histidine 288, aspartate 305, and cysteine 358 contribute to the active site.

The protein belongs to the peptidase C48 family.

The protein resides in the secreted. It localises to the host cell. The protein localises to the membrane. In terms of biological role, effector proteins function to alter host cell physiology and promote bacterial survival in host tissues. This protease possesses deubiquitinating and deneddylating activities. The protein is Deubiquitinase and deneddylase Dub1 (cdu1) of Chlamydia trachomatis serovar D (strain ATCC VR-885 / DSM 19411 / UW-3/Cx).